The primary structure comprises 316 residues: Ribosomal RNA small subunit methyltransferase H (316 aa).

Residues G35–H37, D55, F79, D101, and Q108 each bind S-adenosyl-L-methionine. A disordered region spans residues A291–L316. A compositionally biased stretch (basic and acidic residues) spans P294–R304.

Belongs to the methyltransferase superfamily. RsmH family.

The protein localises to the cytoplasm. It catalyses the reaction cytidine(1402) in 16S rRNA + S-adenosyl-L-methionine = N(4)-methylcytidine(1402) in 16S rRNA + S-adenosyl-L-homocysteine + H(+). Its function is as follows. Specifically methylates the N4 position of cytidine in position 1402 (C1402) of 16S rRNA. The chain is Ribosomal RNA small subunit methyltransferase H from Vibrio atlanticus (strain LGP32) (Vibrio splendidus (strain Mel32)).